The chain runs to 206 residues: Molybdopterin synthase catalytic subunit (206 aa).

A compositionally biased stretch (polar residues) spans 1–23; that stretch reads MATQQPTQTDNSAQAQPPQTNPA. The disordered stretch occupies residues 1–27; the sequence is MATQQPTQTDNSAQAQPPQTNPAKPTE. Residues 131-132, Lys147, and 154-156 contribute to the substrate site; these read HR and KRE. Over residues 177–188 the composition is skewed to basic and acidic residues; the sequence is KVDEPRIGKGEV. The tract at residues 177–206 is disordered; that stretch reads KVDEPRIGKGEVDEKEDEGDSGNGGNDRKS. The span at 197 to 206 shows a compositional bias: gly residues; it reads SGNGGNDRKS.

It belongs to the MoaE family. MOCS2B subfamily. In terms of assembly, heterotetramer; composed of 2 small (MOCS2A) and 2 large (MOCS2B) subunits.

The protein localises to the cytoplasm. The enzyme catalyses 2 [molybdopterin-synthase sulfur-carrier protein]-C-terminal-Gly-aminoethanethioate + cyclic pyranopterin phosphate + H2O = molybdopterin + 2 [molybdopterin-synthase sulfur-carrier protein]-C-terminal Gly-Gly + 2 H(+). The protein operates within cofactor biosynthesis; molybdopterin biosynthesis. In terms of biological role, catalytic subunit of the molybdopterin synthase complex, a complex that catalyzes the conversion of precursor Z into molybdopterin. Acts by mediating the incorporation of 2 sulfur atoms from thiocarboxylated MOCS2A into precursor Z to generate a dithiolene group. The protein is Molybdopterin synthase catalytic subunit (nit-8) of Neurospora crassa (strain ATCC 24698 / 74-OR23-1A / CBS 708.71 / DSM 1257 / FGSC 987).